The sequence spans 486 residues: Betaine aldehyde dehydrogenase (486 aa).

The K(+) site is built by threonine 23 and aspartate 90. 147 to 149 (GAW) serves as a coordination point for NAD(+). The active-site Charge relay system is lysine 159. NAD(+) is bound by residues 173–176 (KPSE) and 226–229 (ESGT). Position 241 (leucine 241) interacts with K(+). Glutamate 247 (proton acceptor) is an active-site residue. Residues glycine 249, cysteine 281, and glutamate 382 each contribute to the NAD(+) site. Cysteine 281 acts as the Nucleophile in catalysis. Cysteine 281 bears the Cysteine sulfenic acid (-SOH) mark. K(+) contacts are provided by lysine 452 and glycine 455. The active-site Charge relay system is glutamate 459.

The protein belongs to the aldehyde dehydrogenase family. In terms of assembly, dimer of dimers. Requires K(+) as cofactor.

The catalysed reaction is betaine aldehyde + NAD(+) + H2O = glycine betaine + NADH + 2 H(+). It functions in the pathway amine and polyamine biosynthesis; betaine biosynthesis via choline pathway; betaine from betaine aldehyde: step 1/1. Functionally, involved in the biosynthesis of the osmoprotectant glycine betaine. Catalyzes the irreversible oxidation of betaine aldehyde to the corresponding acid. The chain is Betaine aldehyde dehydrogenase from Vibrio vulnificus (strain YJ016).